Here is a 957-residue protein sequence, read N- to C-terminus: Mediator of RNA polymerase II transcription subunit 16 (957 aa).

Positions 855-883 (YTEVDAAPSGKTNAQGPPQQPQPQQQRRR) are disordered.

Belongs to the Mediator complex subunit 16 family. Component of the Mediator complex.

Its subcellular location is the nucleus. Its function is as follows. Component of the Mediator complex, a coactivator involved in the regulated transcription of nearly all RNA polymerase II-dependent genes. Mediator functions as a bridge to convey information from gene-specific regulatory proteins to the basal RNA polymerase II transcription machinery. Mediator is recruited to promoters by direct interactions with regulatory proteins and serves as a scaffold for the assembly of a functional preinitiation complex with RNA polymerase II and the general transcription factors. The sequence is that of Mediator of RNA polymerase II transcription subunit 16 (sin4) from Aspergillus clavatus (strain ATCC 1007 / CBS 513.65 / DSM 816 / NCTC 3887 / NRRL 1 / QM 1276 / 107).